Here is a 1242-residue protein sequence, read N- to C-terminus: Receptor-type adenylate cyclase GRESAG 4.1 (1242 aa).

Residues 1-39 (MHWQEGGGRGCVYTHGNCRRNLTARALQALQHVEALTCH) lie on the Cytoplasmic side of the membrane. The chain crosses the membrane as a helical span at residues 40–60 (YCVSLLHLLPLLLMWMPPVCA). Residues 61–862 (DDSAVTVNVL…THTVTDSWNN (802 aa)) are Extracellular-facing. N-linked (GlcNAc...) asparagine glycosylation is found at N116, N289, N318, N338, N401, N534, N563, N603, N702, N741, and N818. The helical transmembrane segment at 863-883 (FWVCIRLVIIYCPWCVPTHLP) threads the bilayer. The Cytoplasmic portion of the chain corresponds to 884–1242 (AERRNNNRAP…PFYDMHLQEY (359 aa)). In terms of domain architecture, Guanylate cyclase spans 901–1056 (TLIFTDIESS…RTPNMAARTE (156 aa)). Mg(2+)-binding residues include D906 and D949.

Belongs to the adenylyl cyclase class-3 family. Mg(2+) is required as a cofactor.

It localises to the membrane. It carries out the reaction ATP = 3',5'-cyclic AMP + diphosphate. Could act as a receptor for an unknown ligand. This chain is Receptor-type adenylate cyclase GRESAG 4.1 (GRESAG 4.1), found in Trypanosoma brucei brucei.